The following is a 655-amino-acid chain: Endoplasmic reticulum chaperone BiP (655 aa).

The signal sequence occupies residues 1–19 (MMKFTVVAAALLLLGAVRA). The segment at 1-81 (MMKFTVVAAA…EGERLIGDAA (81 aa)) is required for interaction with ELAPOR1. 37 to 40 (GTTY) provides a ligand contact to ATP. The residue at position 87 (Ser-87) is a Phosphoserine. Lys-97 contributes to the ATP binding site. Lys-126 is modified (N6-acetyllysine). The segment at 126–281 (KPYIQVDIGG…KKKTGKDVRK (156 aa)) is nucleotide-binding (NBD). Tyr-161 bears the 3'-nitrotyrosine mark. Lys-214 bears the N6-acetyllysine mark. 228 to 230 (GGT) provides a ligand contact to ATP. Position 272 is an N6-acetyllysine (Lys-272). 294–301 (EKAKRALS) is an ATP binding site. Lys-327 is subject to N6-acetyllysine. Lys-353 is covalently cross-linked (Glycyl lysine isopeptide (Lys-Gly) (interchain with G-Cter in SUMO2)). Lys-354 carries the post-translational modification N6-acetyllysine; alternate. Lys-354 participates in a covalent cross-link: Glycyl lysine isopeptide (Lys-Gly) (interchain with G-Cter in SUMO1); alternate. 365 to 368 (GSTR) contributes to the ATP binding site. The segment at 410–420 (QDTGDLVLLDV) is interdomain linker. Positions 421–501 (CPLTLGIETV…PRGVPQIEVT (81 aa)) are substrate-binding (SBD). At Lys-448 the chain carries N6-succinyllysine. An Omega-N-methylarginine modification is found at Arg-493. Thr-519 carries the post-translational modification O-AMP-threonine; alternate. Thr-519 is subject to Phosphothreonine; alternate. Lys-586 bears the N6,N6,N6-trimethyllysine; by METTL21A; in vitro mark. Lys-586 carries the N6,N6-dimethyllysine; alternate modification. An N6-methyllysine; alternate modification is found at Lys-586. N6-methyllysine is present on Lys-592. Residues 632-655 (ISKLYGSGGPPPTGEEDTSEKDEL) are disordered. Phosphothreonine occurs at positions 644 and 649. The segment covering 645–655 (GEEDTSEKDEL) has biased composition (acidic residues). Phosphoserine is present on Ser-650. Positions 652-655 (KDEL) match the Prevents secretion from ER motif.

The protein belongs to the heat shock protein 70 family. As to quaternary structure, monomer and homooligomer; homooligomerization via the interdomain linker inactivates the chaperone activity and acts as a storage of HSPA5/BiP molecules. Interacts with DNAJC1 (via J domain). Component of an EIF2 complex at least composed of CELF1/CUGBP1, CALR, CALR3, EIF2S1, EIF2S2, HSP90B1 and HSPA5. Part of a large chaperone multiprotein complex comprising DNAJB11, HSP90B1, HSPA5, HYOU, PDIA2, PDIA4, PDIA6, PPIB, SDF2L1, UGGT1 and very small amounts of ERP29, but not, or at very low levels, CALR nor CANX. Interacts with TMEM132A and TRIM21. May form a complex with ERLEC1, OS9, SEL1L and SYVN1. Interacts with DNAJC10. Interacts with DNAJB9/ERdj4; leading to recruit HSPA5/BiP to ERN1/IRE1. Interacts with ERN1/IRE1 (via luminal domain); the interaction takes place following interaction with DNAJB9/ERdj4 and leads to inactivate ERN1/IRE1, the interaction also competitively inhibits ERN1 interaction with MANF. Interacts directly with MANF (via SAP domain); the interaction inhibits ATP binding to HSPA5/BiP and subsequent nucleotide exchange. Interacts with ERN1 (via luminal domain); the interaction competitively inhibits ERN1 interaction with MANF. Interacts with EIF2AK3/PERK (via luminal domain); interaction leads to inactivate EIF2AK3/PERK. Interacts with MX1. Interacts with METTL23. Interacts with CEMIP; the interaction induces calcium leakage from the endoplasmic reticulum and cell migration. Interacts with PCSK4 form; the interaction takes place in the endoplasmic reticulum. Interacts with CIPC. Interacts with CCDC88B (via C-terminus); the interaction opposes ERN1-mediated JNK activation, protecting against apoptosis. Interacts with INPP5K; necessary for INPP5K localization at the endoplasmic reticulum. Interacts with MANF; the interaction is direct. Interacts with LOXL2; leading to activate the ERN1/IRE1-XBP1 pathway of the unfolded protein response. Interacts with CLU under stressed condition; interaction increases CLU protein stability; facilitates its retrotranslocation and redistribution to the mitochondria; cooperatively suppress stress-induced apoptosis by stabilizing mitochondrial membrane integrity. Interacts with CCDC47. Interacts with CLN3. Interacts with ELAPOR1; may regulate the function of HSPA5 in apoptosis and cell proliferation. Interacts with CASP7. Interacts with ILDR2; the interaction stabilizes ILDR2 expression. Interacts with ADAM7. In terms of processing, in unstressed cells, AMPylation at Thr-519 by FICD inactivates the chaperome activity: AMPylated form is locked in a relatively inert state and only weakly stimulated by J domain-containing proteins. In response to endoplasmic reticulum stress, de-AMPylation by the same protein, FICD, restores the chaperone activity. As to expression, expressed in sperm (at protein level).

The protein localises to the endoplasmic reticulum lumen. It localises to the melanosome. Its subcellular location is the cytoplasm. The protein resides in the cell surface. The catalysed reaction is ATP + H2O = ADP + phosphate + H(+). With respect to regulation, the chaperone activity is regulated by ATP-induced allosteric coupling of the nucleotide-binding (NBD) and substrate-binding (SBD) domains. In the ADP-bound and nucleotide-free (apo) states, the two domains have little interaction. In contrast, in the ATP-bound state the two domains are tightly coupled, which results in drastically accelerated kinetics in both binding and release of polypeptide substrates. J domain-containing co-chaperones (DNAJB9/ERdj4 or DNAJC10/ERdj5) stimulate the ATPase activity and are required for efficient substrate recognition by HSPA5/BiP. Homooligomerization inactivates participating HSPA5/BiP protomers and probably act as reservoirs to store HSPA5/BiP molecules when they are not needed by the cell. Functionally, endoplasmic reticulum chaperone that plays a key role in protein folding and quality control in the endoplasmic reticulum lumen. Involved in the correct folding of proteins and degradation of misfolded proteins via its interaction with DNAJC10/ERdj5, probably to facilitate the release of DNAJC10/ERdj5 from its substrate. Acts as a key repressor of the EIF2AK3/PERK and ERN1/IRE1-mediated unfolded protein response (UPR). In the unstressed endoplasmic reticulum, recruited by DNAJB9/ERdj4 to the luminal region of ERN1/IRE1, leading to disrupt the dimerization of ERN1/IRE1, thereby inactivating ERN1/IRE1. Also binds and inactivates EIF2AK3/PERK in unstressed cells. Accumulation of misfolded protein in the endoplasmic reticulum causes release of HSPA5/BiP from ERN1/IRE1 and EIF2AK3/PERK, allowing their homodimerization and subsequent activation. Plays an auxiliary role in post-translational transport of small presecretory proteins across endoplasmic reticulum (ER). May function as an allosteric modulator for SEC61 channel-forming translocon complex, likely cooperating with SEC62 to enable the productive insertion of these precursors into SEC61 channel. Appears to specifically regulate translocation of precursors having inhibitory residues in their mature region that weaken channel gating. May also play a role in apoptosis and cell proliferation. The sequence is that of Endoplasmic reticulum chaperone BiP from Mus musculus (Mouse).